The following is a 1233-amino-acid chain: Structural maintenance of chromosomes protein 1A (1233 aa).

An ATP-binding site is contributed by 32–39; it reads GPNGSGKS. 2 coiled-coil regions span residues 104-124 and 163-503; these read EYKI…LEKL and ELAQ…KAEI. Residues 284 to 293 are compositionally biased toward basic and acidic residues; it reads IKEKDSELNQ. Disordered regions lie at residues 284–308 and 348–369; these read IKEK…TSHK and QEFE…TLEE. S358 and S360 each carry phosphoserine. The 115-residue stretch at 515-629 folds into the SMC hinge domain; that stretch reads VYGRLIDLCQ…DNVEDARRIA (115 aa). 2 positions are modified to N6-acetyllysine: K648 and K713. A coiled-coil region spans residues 660-935; it reads KAKARRWDEK…RHNLLQACKM (276 aa). Residues 947–966 are disordered; that stretch reads MDDISQEEGSSQGEDSVSGS. The segment covering 953 to 966 has biased composition (low complexity); sequence EEGSSQGEDSVSGS. At S957 the chain carries Phosphoserine; by ATM. S962 carries the phosphoserine modification. S966 bears the Phosphoserine; by ATM and ATR mark. S970 is modified (phosphoserine). Positions 991 to 1068 form a coiled coil; that stretch reads KDAQAEEEIK…FEQIKKERFD (78 aa). Residue K1037 is modified to N6-acetyllysine.

This sequence belongs to the SMC family. SMC1 subfamily. In terms of assembly, forms a heterodimer with SMC3 in cohesin complexes. Cohesin complexes are composed of the SMC1 (SMC1A or SMC1B) and SMC3 heterodimer attached via their SMC hinge domain, RAD21 which link them, and one STAG protein (STAG1, STAG2 or STAG3), which interacts with RAD21. In germ cell cohesin complexes, SMC1A is mutually exclusive with SMC1B. Interacts with BRCA1. Found in a complex with CDCA5, SMC3 and RAD21, PDS5A/SCC-112 and PDS5B/APRIN. Interacts with NDC80. Interacts with BRAT1. Found in a complex containing POLE and SMC3. Interacts with RPGR, STAG3 and SYCP2. The cohesin complex interacts with the cohesin loading complex subunits NIPBL/Scc2 (via HEAT repeats) and MAU2/Scc4. NIPBL directly contacts all members of the complex, RAD21, SMC1A/B, SMC3 and STAG1. In terms of processing, ubiquitinated by the DCX(DCAF15) complex, leading to its degradation. Post-translationally, phosphorylated by ATM upon ionizing radiation in a NBS1-dependent manner. Phosphorylated by ATR upon DNA methylation in a MSH2/MSH6-dependent manner. Phosphorylation of Ser-957 and Ser-966 activates it and is required for S-phase checkpoint activation.

Its subcellular location is the nucleus. It localises to the chromosome. The protein localises to the centromere. It is found in the kinetochore. Its function is as follows. Involved in chromosome cohesion during cell cycle and in DNA repair. Central component of cohesin complex. The cohesin complex is required for the cohesion of sister chromatids after DNA replication. The cohesin complex apparently forms a large proteinaceous ring within which sister chromatids can be trapped. At anaphase, the complex is cleaved and dissociates from chromatin, allowing sister chromatids to segregate. The cohesin complex may also play a role in spindle pole assembly during mitosis. Involved in DNA repair via its interaction with BRCA1 and its related phosphorylation by ATM, or via its phosphorylation by ATR. Works as a downstream effector both in the ATM/NBS1 branch and in the ATR/MSH2 branch of S-phase checkpoint. This chain is Structural maintenance of chromosomes protein 1A (SMC1A), found in Homo sapiens (Human).